Here is a 239-residue protein sequence, read N- to C-terminus: IkB-like protein (239 aa).

4 ANK repeats span residues asparagine 48–glutamate 77, aspartate 87–isoleucine 116, asparagine 124–arginine 153, and lysine 158–phenylalanine 187. The short motif at histidine 81 to aspartate 87 is the Nuclear localization signal element. Positions lysine 203–glutamate 214 match the Nuclear localization signal motif. Residues proline 206 to cysteine 213 carry the PxIxITxC motif; Interaction with host PPP3CA motif. An FLCV motif motif is present at residues phenylalanine 228–valine 231.

Belongs to the asfivirus A238L family. Interacts with host PPIA. Interacts with host PPP3CA/Calcineurin. Interacts with host RELA/p65; interaction of the 32 kDa form with host RELA results in the formation of a stable complex with NF-kappa-B. Interacts with host PPP3R1. Interacts with host EP300; this interaction inhibits the association of host EP300 with host RELA, JUN and NFATC2. In terms of processing, the protein exists in a 28 kDa and a 32 kDa form, probably due to post-translational modifications which are neither phosphorylation, nor sumoylation.

It is found in the host nucleus. Its subcellular location is the host cytoplasm. Functionally, ikB-like protein that inhibits the binding of NF-kappa-B to DNA, thereby downregulating pro-inflammatory cytokine production. Forms a heterodimer with the NF-kappa-B subunit RELA/p65 and prevents the activation of the NF-kappa-B transcription factor. Inhibits calcineurin function, which is required for the induction of nuclear factor of activated T cells (NFAT)-dependent immune response genes. Prevents the binding of substrates to calcineurin without affecting the phosphatase activity. Does not contain the serine residues that are phosphorylated by host IkB kinase and thus is not degraded following stimulation of the NFkB pathway. This is IkB-like protein (A238L) from Ornithodoros (relapsing fever ticks).